Consider the following 900-residue polypeptide: DNA mismatch repair protein MutS (900 aa).

Residues 1–88 (MPGPSDDPTE…PAWAHHSQVD (88 aa)) form a disordered region. Residues 56–68 (APADHNAADHDSN) show a composition bias toward basic and acidic residues. 714 to 721 (GPNASGKS) provides a ligand contact to ATP.

The protein belongs to the DNA mismatch repair MutS family.

In terms of biological role, this protein is involved in the repair of mismatches in DNA. It is possible that it carries out the mismatch recognition step. This protein has a weak ATPase activity. The sequence is that of DNA mismatch repair protein MutS from Parasynechococcus marenigrum (strain WH8102).